The primary structure comprises 298 residues: Lipoyl synthase (298 aa).

Residues C40, C45, C51, C67, C71, C74, and S280 each coordinate [4Fe-4S] cluster. A Radical SAM core domain is found at 53-269; that stretch reads AVRKTATFMI…KEIALSKGFS (217 aa).

The protein belongs to the radical SAM superfamily. Lipoyl synthase family. [4Fe-4S] cluster is required as a cofactor.

It localises to the cytoplasm. The enzyme catalyses [[Fe-S] cluster scaffold protein carrying a second [4Fe-4S](2+) cluster] + N(6)-octanoyl-L-lysyl-[protein] + 2 oxidized [2Fe-2S]-[ferredoxin] + 2 S-adenosyl-L-methionine + 4 H(+) = [[Fe-S] cluster scaffold protein] + N(6)-[(R)-dihydrolipoyl]-L-lysyl-[protein] + 4 Fe(3+) + 2 hydrogen sulfide + 2 5'-deoxyadenosine + 2 L-methionine + 2 reduced [2Fe-2S]-[ferredoxin]. Its pathway is protein modification; protein lipoylation via endogenous pathway; protein N(6)-(lipoyl)lysine from octanoyl-[acyl-carrier-protein]. Its function is as follows. Catalyzes the radical-mediated insertion of two sulfur atoms into the C-6 and C-8 positions of the octanoyl moiety bound to the lipoyl domains of lipoate-dependent enzymes, thereby converting the octanoylated domains into lipoylated derivatives. This is Lipoyl synthase from Bacillus cereus (strain ATCC 10987 / NRS 248).